Reading from the N-terminus, the 131-residue chain is MKIALIAHDKKKNDMVSFAYAYKPIFEQHELFATGTTGLRIMEATGLVITRYQSGPLGGDQEIGAMIAKNDLDMVIFFRDPLTAQPHEPDVNALLRLCDVYAIPLATNMASAEMLMHALERGDLDYRKLRK.

Residues 1–131 form the MGS-like domain; that stretch reads MKIALIAHDK…GDLDYRKLRK (131 aa). Substrate-binding positions include histidine 8, lysine 12, 34-37, and 54-55; these read TGTT and SG. Aspartate 60 functions as the Proton donor/acceptor in the catalytic mechanism. Residue histidine 87 coordinates substrate.

The protein belongs to the methylglyoxal synthase family.

The catalysed reaction is dihydroxyacetone phosphate = methylglyoxal + phosphate. Catalyzes the formation of methylglyoxal from dihydroxyacetone phosphate. This is Methylglyoxal synthase from Bacillus cereus (strain ATCC 14579 / DSM 31 / CCUG 7414 / JCM 2152 / NBRC 15305 / NCIMB 9373 / NCTC 2599 / NRRL B-3711).